We begin with the raw amino-acid sequence, 547 residues long: Signal recognition particle receptor subunit alpha homolog (547 aa).

The segment at 124–174 (LENETDTKSLPVEANNDNSARKKNEYEMKKKGAQSKQTNAPKKGKKQLRKW) is disordered. The span at 142–153 (SARKKNEYEMKK) shows a compositional bias: basic and acidic residues. Residues 343-546 (YTISLIGVNG…SVDWVVDQLM (204 aa)) form an NG domain region. GTP contacts are provided by residues 349 to 356 (GVNGVGKS), 437 to 441 (DTAGR), and 498 to 501 (SKVD).

Belongs to the GTP-binding SRP family. Heterodimer of an alpha and a beta chain.

The protein resides in the endoplasmic reticulum membrane. Functionally, component of the SRP (signal recognition particle) receptor (SR). Ensures, in conjunction with the signal recognition particle, the correct targeting of the nascent secretory proteins to the endoplasmic reticulum membrane system. GTP hydrolysis may enhance the fidelity of and provide unidirectionality to the targeting reaction. In Schizosaccharomyces pombe (strain 972 / ATCC 24843) (Fission yeast), this protein is Signal recognition particle receptor subunit alpha homolog (srp101).